Reading from the N-terminus, the 486-residue chain is Ribulose bisphosphate carboxylase large chain (486 aa).

Substrate is bound by residues N126 and T176. K178 functions as the Proton acceptor in the catalytic mechanism. Position 180 (K180) interacts with substrate. The Mg(2+) site is built by K204, D206, and E207. K204 bears the N6-carboxylysine mark. Residue H296 is the Proton acceptor of the active site. Residues R297, H329, and S381 each coordinate substrate.

Belongs to the RuBisCO large chain family. Type I subfamily. In terms of assembly, heterohexadecamer of 8 large chains and 8 small chains. Requires Mg(2+) as cofactor.

The enzyme catalyses 2 (2R)-3-phosphoglycerate + 2 H(+) = D-ribulose 1,5-bisphosphate + CO2 + H2O. It catalyses the reaction D-ribulose 1,5-bisphosphate + O2 = 2-phosphoglycolate + (2R)-3-phosphoglycerate + 2 H(+). RuBisCO catalyzes two reactions: the carboxylation of D-ribulose 1,5-bisphosphate, the primary event in carbon dioxide fixation, as well as the oxidative fragmentation of the pentose substrate. Both reactions occur simultaneously and in competition at the same active site. The protein is Ribulose bisphosphate carboxylase large chain of Cupriavidus taiwanensis (strain DSM 17343 / BCRC 17206 / CCUG 44338 / CIP 107171 / LMG 19424 / R1) (Ralstonia taiwanensis (strain LMG 19424)).